A 140-amino-acid polypeptide reads, in one-letter code: uncharacterized protein (140 aa).

This is an uncharacterized protein from Mycoplasma pneumoniae (strain ATCC 29342 / M129 / Subtype 1) (Mycoplasmoides pneumoniae).